The sequence spans 950 residues: MNTEAEQQLLHHARNGNAEEVRKLLAAMARMEVVADIDCKGRSKSNLGWTPLHLACYFGHKQVVEDLLKAGAKVNMLNDMGDTPLHRAAFTGRKELVLLLLEYDADSTVVNGSGQTAKEATHDKEIRNMLEAVERTQQRKLEELLLGAAREGRTAEVSALLSRPNPPDVNCSDQLGNTPLHCAAYRAHKQCVLKLLRSGADPSLKNKNDQKPLDLAQGAEMKHILVGNKVVHKALKRYEGPLWKSSRFFGWKLFWVVLEHGVLSWYRKQPDAVHNSYRQGCKHLTQAVCTVKPTDSCLFSIRCFDDTVHCFRVPKNSVQQSREKWLEAIEEHSAYSTHYCSQDQVTDDEEEDVVSAMDLKESLARAQTCQQRLDREIYNFLKMIKECDVAKDMLPSFLQKADIVSEASRETCVALNDCLNLFTKQEGVRNFKLEQEQEKNKILSEALETLATEHHELERSLVEGSPPVSILSEEEFYDALSGSESEGSLTCLEAVTAHSFEENEVPGSSGKHRMSEGKDCGGGDALSNGIKKHRTSLPSPMFSRNDFSIWSILRKCIGMELSKITMPVIFNEPLSFLQRLTEYMEHTYLIHKASSLSDPVERMQCVAAFAVSAVASQWERTGKPFNPLLGETYELVRDDLGFRLISEQVSHHPPISAFHAEGLNNDFIFHGSIYPKLKFWGKSVEAEPKGTITLELLDHNEAYTWTNPTCCVHNIIVGKLWIEQYGNVEIINHKTGDKCVLNFKPCGLFGKELHKVEGYIQDKSKKKLCALYGKWTECLYSVDPATFDAYKKNDKKNTEEKKNSKQTSSSEESDEMPVPDSESVFIIPGSVLLWRIAPRPPNSAQMYNFTSFAMVLNEVDKEMESVIPKTDCRLRPDIRAMENGEIDLASEEKKRLEEKQRAARKNRSKSEEDWKTRWFHQGPNPYSGAQDWIYSGSYWDRNYFNLPDIY.

The interaction with RAB7A stretch occupies residues 1 to 237 (MNTEAEQQLL…NKVVHKALKR (237 aa)). 3 ANK repeats span residues 47–76 (LGWTPLHLACYFGHKQVVEDLLKAGAKVNM), 80–109 (MGDTPLHRAAFTGRKELVLLLLEYDADSTV), and 175–204 (LGNTPLHCAAYRAHKQCVLKLLRSGADPSL). One can recognise a PH domain in the interval 235-334 (LKRYEGPLWK…WLEAIEEHSA (100 aa)). Positions 430-463 (NFKLEQEQEKNKILSEALETLATEHHELERSLVE) form a coiled coil. The FFAT signature appears at 469–483 (SILSEEEFYDALSGS). Phosphoserine is present on serine 499. Disordered stretches follow at residues 502-530 (ENEVPGSSGKHRMSEGKDCGGGDALSNGI) and 795-821 (KKNTEEKKNSKQTSSSEESDEMPVPDS). A coiled-coil region spans residues 879-913 (RAMENGEIDLASEEKKRLEEKQRAARKNRSKSEED).

This sequence belongs to the OSBP family. Interacts (via FFAT motif) with VAPA and VAPB. Interacts with the GTP-bound form of RAB7A. Interacts with OAS1B. Interacts (via FFAT motif) with MOSPD2 (via MSP domain). As to expression, ubiquitous.

It is found in the late endosome. Functionally, binds phospholipids; exhibits strong binding to phosphatidic acid and weak binding to phosphatidylinositol 3-phosphate. Stabilizes GTP-bound RAB7A on late endosomes/lysosomes and alters functional properties of late endocytic compartments via its interaction with RAB7A. Binds 25-hydroxycholesterol and cholesterol. The polypeptide is Oxysterol-binding protein-related protein 1 (Mus musculus (Mouse)).